We begin with the raw amino-acid sequence, 430 residues long: Adenylosuccinate synthetase (430 aa).

GTP contacts are provided by residues 13-19 (GDEGKGK) and 41-43 (GHT). The active-site Proton acceptor is the Asp-14. Asp-14 and Gly-41 together coordinate Mg(2+). IMP-binding positions include 14–17 (DEGK), 39–42 (NAGH), Thr-130, Arg-144, Gln-225, Thr-240, and Arg-304. The Proton donor role is filled by His-42. Residue 300 to 306 (ATTGRAR) participates in substrate binding. GTP contacts are provided by residues Arg-306, 332-334 (KLD), and 414-416 (STG).

This sequence belongs to the adenylosuccinate synthetase family. In terms of assembly, homodimer. Mg(2+) serves as cofactor.

It localises to the cytoplasm. It catalyses the reaction IMP + L-aspartate + GTP = N(6)-(1,2-dicarboxyethyl)-AMP + GDP + phosphate + 2 H(+). It functions in the pathway purine metabolism; AMP biosynthesis via de novo pathway; AMP from IMP: step 1/2. Plays an important role in the de novo pathway of purine nucleotide biosynthesis. Catalyzes the first committed step in the biosynthesis of AMP from IMP. This Pseudomonas syringae pv. tomato (strain ATCC BAA-871 / DC3000) protein is Adenylosuccinate synthetase.